An 80-amino-acid chain; its full sequence is Exodeoxyribonuclease 7 small subunit (80 aa).

It belongs to the XseB family. Heterooligomer composed of large and small subunits.

The protein localises to the cytoplasm. It carries out the reaction Exonucleolytic cleavage in either 5'- to 3'- or 3'- to 5'-direction to yield nucleoside 5'-phosphates.. Functionally, bidirectionally degrades single-stranded DNA into large acid-insoluble oligonucleotides, which are then degraded further into small acid-soluble oligonucleotides. The protein is Exodeoxyribonuclease 7 small subunit of Marinomonas sp. (strain MWYL1).